A 1490-amino-acid polypeptide reads, in one-letter code: Leucine-rich repeat-containing protein 7 (1490 aa).

LRR repeat units follow at residues 23 to 44 (IISVLDYSHCSLQQVPKEVFNF), 47 to 68 (TLEELYLDANQIEELPKQLFNC), 70 to 91 (ALRKLSIPDNDLSSLPTSIASL), 93 to 114 (NLKELDISKNGVQEFPENIKCC), 116 to 137 (CLTIIEASVNPISKLPDGFTQL), 139 to 161 (NLTQLYLNDAFLEFLPANFGRLV), 162 to 183 (KLRILELRENHLKTLPKSMHKL), 185 to 206 (QLERLDLGNNEFSELPEVLDQI), 208 to 229 (NLRELWMDNNALQVLPGSIGKL), 231 to 253 (MLVYLDMSKNRIETVDMDISGCE), 254 to 275 (ALEDLLLSSNMLQQLPDSIGLL), 277 to 298 (KLTTLKVDDNQLTMLPNTIGNL), 300 to 321 (LLEEFDCSCNELESLPPTIGYL), 323 to 344 (SLRTLAVDENFLPELPREIGSC), 346 to 367 (NVTVMSLRSNKLEFLPEEIGQM), 369 to 391 (RLRVLNLSDNRLKNLPFSFTKLK), and 392 to 413 (ELAALWLSDNQSKALIPLQTEA). Phosphoserine occurs at positions 439, 441, and 443. Positions 663-676 (KKESTDESEVDKTH) are enriched in basic and acidic residues. Disordered regions lie at residues 663–709 (KKES…VGSL), 775–808 (DNTGFVSEEATGENANNNPLLSSKARSVPAHGRR), and 822–899 (ELEQ…YHDP). Positions 677-686 (CLNNSVSSGT) are enriched in polar residues. Positions 687 to 700 (YSDYSPSQASSASS) are enriched in low complexity. A compositionally biased stretch (polar residues) spans 787–799 (ENANNNPLLSSKA). Threonine 831 is modified (phosphothreonine). The residue at position 850 (serine 850) is a Phosphoserine. The segment covering 859-871 (PSKLETTPTTSPL) has biased composition (low complexity). Position 865 is a phosphothreonine (threonine 865). Serine 869 bears the Phosphoserine mark. A compositionally biased stretch (basic and acidic residues) spans 872 to 882 (PERKDHMKEPT). Phosphoserine is present on residues serine 947, serine 949, and serine 1118. Arginine 1149 is modified (omega-N-methylarginine). The segment covering 1194-1217 (LTQRRPLSARSYSTESYGASQTRP) has biased composition (polar residues). Residues 1194 to 1218 (LTQRRPLSARSYSTESYGASQTRPV) form a disordered region. Serine 1233 carries the phosphoserine modification. Disordered stretches follow at residues 1238 to 1265 (GNYGDKTSDNSDIKTRPTPVKGEESCGK) and 1282 to 1312 (RLDRTPSQQSNILDNGQEDVSPSGQWNPYPL). A compositionally biased stretch (basic and acidic residues) spans 1243-1263 (KTSDNSDIKTRPTPVKGEESC). The span at 1286–1307 (TPSQQSNILDNGQEDVSPSGQW) shows a compositional bias: polar residues. Phosphoserine is present on residues serine 1288 and serine 1392. Positions 1398–1488 (EQFCVRIEKN…TVDLVIQREL (91 aa)) constitute a PDZ domain.

It belongs to the LAP (LRR and PDZ) protein family. As to quaternary structure, interacts with CNKSR2 and DLG4. Interacts with CTNND2/Catenin delta-2. Forms a complex with N-cadherin through CTNND2. Interacts with CAMK2A. O-glycosylated and phosphorylated. Brain-specific. Highly concentrated at synapses.

The protein resides in the cytoplasm. Its subcellular location is the postsynaptic density. Required for normal synaptic spine architecture and function. Necessary for DISC1 and GRM5 localization to postsynaptic density complexes and for both N-methyl D-aspartate receptor-dependent and metabotropic glutamate receptor-dependent long term depression. The sequence is that of Leucine-rich repeat-containing protein 7 (Lrrc7) from Rattus norvegicus (Rat).